The sequence spans 159 residues: Endoribonuclease YbeY (159 aa).

Residues histidine 122, histidine 126, and histidine 132 each coordinate Zn(2+).

It belongs to the endoribonuclease YbeY family. The cofactor is Zn(2+).

The protein resides in the cytoplasm. Functionally, single strand-specific metallo-endoribonuclease involved in late-stage 70S ribosome quality control and in maturation of the 3' terminus of the 16S rRNA. The protein is Endoribonuclease YbeY of Roseiflexus castenholzii (strain DSM 13941 / HLO8).